An 810-amino-acid polypeptide reads, in one-letter code: Actin-regulating kinase PRK1 (810 aa).

Positions 22–298 (AKIIKYLTSG…CQVLEEVSRL (277 aa)) constitute a Protein kinase domain. Residues 28-36 (LTSGGFAQV) and Lys56 contribute to the ATP site. Residue Asp158 is the Proton acceptor of the active site. Phosphoserine is present on residues Ser402, Ser428, and Ser484. Disordered stretches follow at residues 552–668 (FTGN…NVNI) and 733–761 (GVLD…HLRT). Thr553 carries the post-translational modification Phosphothreonine. Residues 553–566 (TGNSVNNSRSASFD) show a composition bias toward polar residues. Residue Ser556 is modified to Phosphoserine. Residues 567 to 588 (NNNVNGNGNNTNRRLVSSSTSS) are compositionally biased toward low complexity. Composition is skewed to basic and acidic residues over residues 594-612 (SDTK…EKRR) and 622-639 (FDQH…DYYR). Low complexity predominate over residues 645–658 (KKTQASAKTTSKPT). The span at 733-748 (GVLDIKTKSNGKDKSR) shows a compositional bias: basic and acidic residues. Positions 743-756 (GKDKSRPPRPPPKP) are interaction with SH3 domain of ABP1.

This sequence belongs to the protein kinase superfamily. Ser/Thr protein kinase family. Interacts with ABP1, which is required for proper actin patch localization.

It localises to the cytoplasm. Its subcellular location is the cytoskeleton. The protein resides in the actin patch. It catalyses the reaction L-seryl-[protein] + ATP = O-phospho-L-seryl-[protein] + ADP + H(+). The enzyme catalyses L-threonyl-[protein] + ATP = O-phospho-L-threonyl-[protein] + ADP + H(+). Protein kinase involved in the regulation of actin cytoskeleton organization and endocytosis. Phosphorylates PAN1 which disrupts the interaction between PAN1 and END3, and between PAN1 and SLA1. Phosphorylates SCD5. Preferentially, phosphorylates substrates on threonine residues in a [L/I/V/M]-x-x-[Q/N/T/S]-x-T-G motif. This chain is Actin-regulating kinase PRK1 (PRK1), found in Saccharomyces cerevisiae (strain ATCC 204508 / S288c) (Baker's yeast).